The primary structure comprises 216 residues: Octanoyltransferase (216 aa).

A BPL/LPL catalytic domain is found at 33–216; it reads AQTADELWIV…AEKLTRHLSG (184 aa). Residues 72 to 79, 148 to 150, and 162 to 164 each bind substrate; these read RGGEVTYH, ALG, and GVS. Cys180 functions as the Acyl-thioester intermediate in the catalytic mechanism.

The protein belongs to the LipB family.

The protein resides in the cytoplasm. The enzyme catalyses octanoyl-[ACP] + L-lysyl-[protein] = N(6)-octanoyl-L-lysyl-[protein] + holo-[ACP] + H(+). It functions in the pathway protein modification; protein lipoylation via endogenous pathway; protein N(6)-(lipoyl)lysine from octanoyl-[acyl-carrier-protein]: step 1/2. Functionally, catalyzes the transfer of endogenously produced octanoic acid from octanoyl-acyl-carrier-protein onto the lipoyl domains of lipoate-dependent enzymes. Lipoyl-ACP can also act as a substrate although octanoyl-ACP is likely to be the physiological substrate. This Herminiimonas arsenicoxydans protein is Octanoyltransferase.